The following is a 265-amino-acid chain: Palmitoyltransferase ZDHHC21 (265 aa).

At 1–16 (MGLRIHFVVDPHGWCC) the chain is on the cytoplasmic side. Residues 17–37 (MGLIVFVWLYNIVIIPKIVLF) traverse the membrane as a helical segment. The Extracellular portion of the chain corresponds to 38 to 44 (PHYEEGH). A helical membrane pass occupies residues 45 to 65 (IPGILIIIFYGISIFCLVALV). Topologically, residues 66 to 133 (RASLTDPGRL…NNCVGEDNHW (68 aa)) are cytoplasmic. In terms of domain architecture, DHHC spans 90-140 (ELCNKCNLMRPKRSHHCSRCGHCVRRMDHHCPWINNCVGEDNHWLFLQLCF). Cys-120 functions as the S-palmitoyl cysteine intermediate in the catalytic mechanism. The helical transmembrane segment at 134-154 (LFLQLCFYTELLTCYALMFSF) threads the bilayer. The Extracellular portion of the chain corresponds to 155 to 185 (CHYYYFLPLKKRNLDLFVVRHELAIMRLAAF). A helical membrane pass occupies residues 186-206 (MGITMLVGITGLFYTQLIGII). Over 207 to 265 (TDTTSIEKMSNCCEEISRPRKPWQQTFSEVFGTRWKILWFIPFRQRQPLRVPYHFANHV) the chain is Cytoplasmic.

It belongs to the DHHC palmitoyltransferase family. In terms of tissue distribution, widely expressed. Expressed in Henle's layer within the hair bulb and the hair shaft cuticle (at protein level). Expression is limited to the post-mitotic lineages of inner root sheath (IRS) and cuticle.

Its subcellular location is the golgi apparatus membrane. The protein localises to the golgi apparatus. The protein resides in the cis-Golgi network membrane. It is found in the cell membrane. It carries out the reaction L-cysteinyl-[protein] + hexadecanoyl-CoA = S-hexadecanoyl-L-cysteinyl-[protein] + CoA. Functionally, palmitoyltransferase that catalyzes the addition of palmitate onto various protein substrates. Palmitoylates sex steroid hormone receptors, including ESR1, PGR and AR, thereby regulating their targeting to the plasma membrane. This affects rapid intracellular signaling by sex hormones via ERK and AKT kinases and the generation of cAMP, but does not affect that mediated by their nuclear receptor. Palmitoylates FYN, regulates its localization in hair follicles and plays a key role in epidermal homeostasis and hair follicle differentiation. Through the palmitoylation of PLCB1 and the regulation of PLCB1 downstream signaling may indirectly regulate the function of the endothelial barrier and the adhesion of leukocytes to the endothelium. Also has a palmitoyltransferase activity toward ADRA1D, positively regulating its activity and expression and may thereby play a role in vascular contraction. May also palmitoylate eNOS and LCK. The chain is Palmitoyltransferase ZDHHC21 from Mus musculus (Mouse).